Consider the following 98-residue polypeptide: Large ribosomal subunit protein bL27 (98 aa).

Over residues 1–11 (MASKASGGSTR) the composition is skewed to polar residues. The disordered stretch occupies residues 1-20 (MASKASGGSTRNGRDSISKR).

Belongs to the bacterial ribosomal protein bL27 family.

In Aquifex aeolicus (strain VF5), this protein is Large ribosomal subunit protein bL27.